The following is a 247-amino-acid chain: Probable transcriptional regulatory protein PC1_1817 (247 aa).

It belongs to the TACO1 family.

It is found in the cytoplasm. The chain is Probable transcriptional regulatory protein PC1_1817 from Pectobacterium carotovorum subsp. carotovorum (strain PC1).